The primary structure comprises 158 residues: Transcription elongation factor GreA (158 aa).

A coiled-coil region spans residues 53-73 (EQQGMVEARIRDIEAKLSNAQ).

Belongs to the GreA/GreB family.

Functionally, necessary for efficient RNA polymerase transcription elongation past template-encoded arresting sites. The arresting sites in DNA have the property of trapping a certain fraction of elongating RNA polymerases that pass through, resulting in locked ternary complexes. Cleavage of the nascent transcript by cleavage factors such as GreA or GreB allows the resumption of elongation from the new 3'terminus. GreA releases sequences of 2 to 3 nucleotides. The protein is Transcription elongation factor GreA of Pseudomonas aeruginosa (strain ATCC 15692 / DSM 22644 / CIP 104116 / JCM 14847 / LMG 12228 / 1C / PRS 101 / PAO1).